The following is an 878-amino-acid chain: F-box DNA helicase protein 1 (878 aa).

Residues 8-56 (SCKFYRLPLEIIPLICRFLSVQDIQSFIRVFPSFQTILDSSNDLFWKKK) form the F-box domain.

Belongs to the helicase family. UvrD subfamily. In terms of assembly, part of the E3 ubiquitin ligase Skp1-Cullin-1-F-box (SCF) complex. Interacts with skp1 and ssb1. Mg(2+) serves as cofactor. The cofactor is Mn(2+).

It is found in the cytoplasm. Its subcellular location is the nucleus. The catalysed reaction is Couples ATP hydrolysis with the unwinding of duplex DNA by translocating in the 3'-5' direction.. It catalyses the reaction ATP + H2O = ADP + phosphate + H(+). The protein operates within protein modification; protein ubiquitination. Functionally, involved in ATP-dependent DNA-unwinding in a 3' to 5' direction, and ATP-ase activities stimulated by the single-stranded DNA-binding protein ssb1. Essential for viability and normal growth of stationary phase cells and in the absence of either srs2 or rqh1 DNA helicase. Involved in DNA recombination repair of strand breaks and stalled or collapsed replication forks, on the rhp51-dependent pathway: promotes rhp51 filament dissolution from stalled forks, thereby inhibiting homologous recombination and preventing excessive recombination. Ubiquitination and DNA helicase activities are essential for controlling rhp51-dependent recombination in the absence of rad22. Plays a role in the processing of toxic recombination intermediates. Promotes proper chromosome segregation. In Schizosaccharomyces pombe (strain 972 / ATCC 24843) (Fission yeast), this protein is F-box DNA helicase protein 1 (fbh1).